A 146-amino-acid polypeptide reads, in one-letter code: Transcriptional regulator MraZ (146 aa).

2 SpoVT-AbrB domains span residues Thr-9–Val-55 and Ala-81–Arg-124.

Belongs to the MraZ family. In terms of assembly, forms oligomers.

The protein localises to the cytoplasm. Its subcellular location is the nucleoid. This chain is Transcriptional regulator MraZ, found in Leptothrix cholodnii (strain ATCC 51168 / LMG 8142 / SP-6) (Leptothrix discophora (strain SP-6)).